A 334-amino-acid polypeptide reads, in one-letter code: TPR repeat-containing protein YsoA (334 aa).

3 TPR repeats span residues 17–50 (KDRLVEKGMSSLKEKKYQEALELFSEAMKYDDTE), 52–84 (DLHLGMAICFLELGELEEAESVCEKMLKEGYGH), and 195–230 (HPIIKTMIVMLLAEHEYSKPVHISKFGESLTIEPSE).

In Bacillus subtilis (strain 168), this protein is TPR repeat-containing protein YsoA (ysoA).